The following is a 65-amino-acid chain: Defensin Cg-Defm (65 aa).

Positions 1-22 (MKVFVLLTLAVLLMVSADMAFA) are cleaved as a signal peptide. The beta-D-GlcNAc-(1-&gt;4)-Mur2Ac(oyl-L-Ala-gamma-D-Glu-L-Lys-D-Ala-D-Ala)-di-trans,octa-cis-undecaprenyl diphosphate site is built by phenylalanine 24, glycine 25, and cysteine 26. 4 disulfides stabilise this stretch: cysteine 26–cysteine 47, cysteine 33–cysteine 56, cysteine 37–cysteine 58, and cysteine 42–cysteine 61. The tract at residues 27-30 (PGNQ) is binds to membrane interface. Histidine 36 is a binding site for beta-D-GlcNAc-(1-&gt;4)-Mur2Ac(oyl-L-Ala-gamma-D-Glu-L-Lys-D-Ala-D-Ala)-di-trans,octa-cis-undecaprenyl diphosphate. The segment at 48-54 (DAATLWL) is binds to membrane interface. Residue cysteine 56 coordinates beta-D-GlcNAc-(1-&gt;4)-Mur2Ac(oyl-L-Ala-gamma-D-Glu-L-Lys-D-Ala-D-Ala)-di-trans,octa-cis-undecaprenyl diphosphate.

The protein belongs to the invertebrate defensin family. In terms of tissue distribution, expressed in the mantle. Low or no expression in most of the organs analyzed, including hemocytes, heart, digestive gland, and gills.

It is found in the secreted. It localises to the target cell membrane. Antibacterial peptide mostly active against Gram-positive bacteria (M.lysodeikticus, S.aureus, and the marine bacteria, B.stationis, and M.maritypicum). It acts by selectively inhibiting peptidoglycan biosynthesis through complex formation with the cell wall precursor lipid II (1:1 molar ratio) thus inhibiting cell wall synthesis. It does not disrupt cell membranes. Is noticeably more potent than Cg-Defh1. It shows no or limited activities against Gram-negative bacteria and filamentous fungi. This Magallana gigas (Pacific oyster) protein is Defensin Cg-Defm.